Consider the following 292-residue polypeptide: Tetrahydromethanopterin:alpha-L-glutamate ligase (292 aa).

The region spanning 103–286 (SFLMEVHKIP…IAQNLIDEAL (184 aa)) is the ATP-grasp domain. ATP-binding positions include K138, 176-188 (QEFVNNPNNVYRD), and R204. Positions 247, 259, and 261 each coordinate Mg(2+). Mn(2+) is bound by residues D247, E259, and N261.

Belongs to the RimK family. MptN subfamily. Homodimer. Mg(2+) serves as cofactor. Requires Mn(2+) as cofactor.

The enzyme catalyses 5,6,7,8-tetrahydromethanopterin + L-glutamate + ATP = 5,6,7,8-tetrahydrosarcinapterin + ADP + phosphate + H(+). Its pathway is cofactor biosynthesis; 5,6,7,8-tetrahydrosarcinapterin biosynthesis. In terms of biological role, catalyzes the ATP or GTP-dependent addition of one L-glutamate molecule to tetrahydromethanopterin, producing tetrahydrosarcinapterin. The sequence is that of Tetrahydromethanopterin:alpha-L-glutamate ligase (mptN) from Methanococcus maripaludis (strain DSM 14266 / JCM 13030 / NBRC 101832 / S2 / LL).